We begin with the raw amino-acid sequence, 566 residues long: Developmental regulatory protein wetA (566 aa).

5 disordered regions span residues 116–174 (VPAV…LMRP), 232–316 (STEG…SDSL), 334–364 (AWWP…SIQS), 381–400 (SSFD…VTSA), and 429–542 (PPVQ…RRRK). Polar residues-rich tracts occupy residues 165–174 (QSFSPSLMRP) and 269–291 (AQQQ…SSPP). Low complexity predominate over residues 298 to 316 (SSPHSSDPQSLSSWHSDSL). 2 stretches are compositionally biased toward polar residues: residues 347–364 (PSYQ…SIQS) and 381–398 (SSFD…SVVT). Positions 435–448 (SRSPSLSPRGRGSP) are enriched in low complexity. Positions 449 to 462 (TQGSPLRNEASTKT) are enriched in polar residues. Positions 463-473 (SPHRRGYHGRK) are enriched in basic residues. The segment covering 482–500 (PKPVKGPNSSSPGSGSNKS) has biased composition (low complexity). The span at 501–511 (LTVSFVNFTPN) shows a compositional bias: polar residues.

This sequence belongs to the wetA family.

Its function is as follows. BrlA, abaA and wetA are pivotal regulators of conidiophore development and conidium maturation. They act individually and together to regulate their own expression and that of numerous other sporulation-specific genes. Plays an essential role in the completion of conidial maturation and is essential for trehalose biogenesis in conidia. Negatively regulates expression of the melanin biosynthetic gene cluster. Also plays an a role in the early phase of fungal growth including proper hyphal branching. This Aspergillus fumigatus (strain ATCC MYA-4609 / CBS 101355 / FGSC A1100 / Af293) (Neosartorya fumigata) protein is Developmental regulatory protein wetA.